The following is a 126-amino-acid chain: Fluoride-specific ion channel FluC (126 aa).

A run of 4 helical transmembrane segments spans residues 5-25 (LHFL…WLLG), 35-55 (WGTL…LGLI), 68-88 (ALVT…AEVV), and 99-119 (AAGY…LGLA). Glycine 75 and threonine 78 together coordinate Na(+).

Belongs to the fluoride channel Fluc/FEX (TC 1.A.43) family.

The protein resides in the cell inner membrane. The enzyme catalyses fluoride(in) = fluoride(out). Its activity is regulated as follows. Na(+) is not transported, but it plays an essential structural role and its presence is essential for fluoride channel function. In terms of biological role, fluoride-specific ion channel. Important for reducing fluoride concentration in the cell, thus reducing its toxicity. The sequence is that of Fluoride-specific ion channel FluC from Bordetella avium (strain 197N).